A 150-amino-acid polypeptide reads, in one-letter code: Cytochrome c oxidase subunit 5A, mitochondrial (150 aa).

The N-terminal 41 residues, 1 to 41, are a transit peptide targeting the mitochondrion; that stretch reads MLGAALRRCAVAATTWAGPRGLLHSSRTPGPAAAIQSVRCY. Residues 2–17 carry the SIFI-degron motif; it reads LGAALRRCAVAATTWA. 2 positions are modified to N6-acetyllysine: Lys87 and Lys113. Thr141 is modified (phosphothreonine).

The protein belongs to the cytochrome c oxidase subunit 5A family. Component of the cytochrome c oxidase (complex IV, CIV), a multisubunit enzyme composed of 14 subunits. The complex is composed of a catalytic core of 3 subunits MT-CO1, MT-CO2 and MT-CO3, encoded in the mitochondrial DNA, and 11 supernumerary subunits COX4I, COX5A, COX5B, COX6A, COX6B, COX6C, COX7A, COX7B, COX7C, COX8 and NDUFA4, which are encoded in the nuclear genome. The complex exists as a monomer or a dimer and forms supercomplexes (SCs) in the inner mitochondrial membrane with NADH-ubiquinone oxidoreductase (complex I, CI) and ubiquinol-cytochrome c oxidoreductase (cytochrome b-c1 complex, complex III, CIII), resulting in different assemblies (supercomplex SCI(1)III(2)IV(1) and megacomplex MCI(2)III(2)IV(2)). Interacts with AFG1L. Interacts with RAB5IF. In terms of processing, in response to mitochondrial stress, the precursor protein is ubiquitinated by the SIFI complex in the cytoplasm before mitochondrial import, leading to its degradation. Within the SIFI complex, UBR4 initiates ubiquitin chain that are further elongated or branched by KCMF1.

The protein localises to the mitochondrion inner membrane. Its pathway is energy metabolism; oxidative phosphorylation. Component of the cytochrome c oxidase, the last enzyme in the mitochondrial electron transport chain which drives oxidative phosphorylation. The respiratory chain contains 3 multisubunit complexes succinate dehydrogenase (complex II, CII), ubiquinol-cytochrome c oxidoreductase (cytochrome b-c1 complex, complex III, CIII) and cytochrome c oxidase (complex IV, CIV), that cooperate to transfer electrons derived from NADH and succinate to molecular oxygen, creating an electrochemical gradient over the inner membrane that drives transmembrane transport and the ATP synthase. Cytochrome c oxidase is the component of the respiratory chain that catalyzes the reduction of oxygen to water. Electrons originating from reduced cytochrome c in the intermembrane space (IMS) are transferred via the dinuclear copper A center (CU(A)) of subunit 2 and heme A of subunit 1 to the active site in subunit 1, a binuclear center (BNC) formed by heme A3 and copper B (CU(B)). The BNC reduces molecular oxygen to 2 water molecules using 4 electrons from cytochrome c in the IMS and 4 protons from the mitochondrial matrix. In Colobus guereza (Mantled guereza), this protein is Cytochrome c oxidase subunit 5A, mitochondrial (COX5A).